The following is a 142-amino-acid chain: Protein Turandot X (142 aa).

A signal peptide spans 1 to 22 (MGLSIGSLLICVFLGIVPFATA).

Belongs to the Turandot family.

The protein localises to the secreted. A humoral factor that may play a role in stress tolerance. This chain is Protein Turandot X, found in Drosophila melanogaster (Fruit fly).